The primary structure comprises 243 residues: Probable transcriptional regulatory protein BDI_1233 (243 aa).

This sequence belongs to the TACO1 family.

It localises to the cytoplasm. This Parabacteroides distasonis (strain ATCC 8503 / DSM 20701 / CIP 104284 / JCM 5825 / NCTC 11152) protein is Probable transcriptional regulatory protein BDI_1233.